The primary structure comprises 582 residues: ATP-dependent lipid A-core flippase (582 aa).

The next 5 membrane-spanning stretches (helical) occupy residues 16 to 36 (LWPTIAPFKAGLIVAGVALIL), 63 to 83 (VLVWMPLVVIGLMILRGITSY), 153 to 173 (IIGLFIMMFYYSWQLSIILIV), 253 to 273 (PIIQLIASLALAFVLYAASFP), and 275 to 295 (VMDSLTAGTITVVFSSMIALM). Positions 28 to 310 (IVAGVALILN…LTNVNAQFQR (283 aa)) constitute an ABC transmembrane type-1 domain. Residues 342–578 (VEFRNVTFTY…RGVYAQLHKM (237 aa)) form the ABC transporter domain. 376 to 383 (GRSGSGKS) contacts ATP.

This sequence belongs to the ABC transporter superfamily. Lipid exporter (TC 3.A.1.106) family. In terms of assembly, homodimer.

It is found in the cell inner membrane. It catalyses the reaction ATP + H2O + lipid A-core oligosaccharideSide 1 = ADP + phosphate + lipid A-core oligosaccharideSide 2.. Functionally, involved in lipopolysaccharide (LPS) biosynthesis. Translocates lipid A-core from the inner to the outer leaflet of the inner membrane. Transmembrane domains (TMD) form a pore in the inner membrane and the ATP-binding domain (NBD) is responsible for energy generation. In Escherichia coli O157:H7, this protein is ATP-dependent lipid A-core flippase.